The sequence spans 454 residues: DNA primase small subunit (454 aa).

Residues glutamate 66, aspartate 131, and aspartate 133 contribute to the active site. 2 residues coordinate Mg(2+): aspartate 131 and aspartate 133. The Mn(2+) site is built by aspartate 131 and aspartate 133. 131–133 (DID) contributes to the a ribonucleoside 5'-triphosphate binding site. Zn(2+)-binding residues include cysteine 143, cysteine 144, cysteine 150, and cysteine 153. A Zinc knuckle motif motif is present at residues 143-153 (CCSKTNICEKC). Residue 182 to 188 (SGRRGIH) coordinates a ribonucleoside 5'-triphosphate. Residue aspartate 333 participates in Mg(2+) binding. Aspartate 333 contributes to the Mn(2+) binding site. Residue 342–345 (HLLK) participates in a ribonucleoside 5'-triphosphate binding. The interval 385–420 (DKNSQNDNGHGPTMETNTTENQKDNARGQSNKGHGF) is disordered. Composition is skewed to polar residues over residues 389–404 (QNDN…NTTE) and 411–420 (RGQSNKGHGF).

This sequence belongs to the eukaryotic-type primase small subunit family. Heterodimer of a catalytic subunit spp1/pri1 and a regulatory subunit spp2/pri2, also known as the DNA primase complex. Component of the alpha DNA polymerase complex (also known as the alpha DNA polymerase-primase complex) consisting of four subunits: the catalytic subunit pol1, the accessory subunit spb70/pol12, and the primase complex subunits spp1/pri1 and spp2/pri2 respectively. Mg(2+) is required as a cofactor. Requires Mn(2+) as cofactor.

It localises to the nucleus. The catalysed reaction is ssDNA + n NTP = ssDNA/pppN(pN)n-1 hybrid + (n-1) diphosphate.. In terms of biological role, catalytic subunit of the DNA primase complex and component of the DNA polymerase alpha complex (also known as the alpha DNA polymerase-primase complex - primosome/replisome) which play an essential role in the initiation of DNA synthesis. During the S phase of the cell cycle, the DNA polymerase alpha complex (composed of a catalytic subunit pol1, an accessory subunit spb70/pol12 and two primase subunits, the catalytic subunit spp1/pri1 and the regulatory subunit spp2/pri2) is recruited to DNA at the replicative forks. The primase subunit of the polymerase alpha complex initiates DNA synthesis by oligomerising short RNA primers on both leading and lagging strands. The chain is DNA primase small subunit from Schizosaccharomyces pombe (strain 972 / ATCC 24843) (Fission yeast).